The following is a 201-amino-acid chain: Recombination protein RecR (201 aa).

A C4-type zinc finger spans residues 57–72 (CADCRTFTEQEVCNIC). Residues 81-176 (GQICVVESPA…EASRIAHGVP (96 aa)) enclose the Toprim domain.

It belongs to the RecR family.

In terms of biological role, may play a role in DNA repair. It seems to be involved in an RecBC-independent recombinational process of DNA repair. It may act with RecF and RecO. The sequence is that of Recombination protein RecR from Shigella boydii serotype 18 (strain CDC 3083-94 / BS512).